The chain runs to 351 residues: Photosystem II D2 protein (351 aa).

The helical transmembrane segment at 39 to 59 (CAYLAVGGWLTGTTFVTSWYT) threads the bilayer. His116 is a chlorophyll a binding site. The helical transmembrane segment at 123 to 139 (GFCLRQFEIARLVGLRP) threads the bilayer. Residues Gln128 and Asn141 each coordinate pheophytin a. The chain crosses the membrane as a helical span at residues 151–164 (VFVSVFLMYPLGQA). Residue His196 participates in chlorophyll a binding. A helical membrane pass occupies residues 206 to 226 (GALLCAIHGATVQNTLFEDGD). A plastoquinone is bound by residues His213 and Phe260. Fe cation is bound at residue His213. A Fe cation-binding site is contributed by His267. A helical membrane pass occupies residues 277 to 293 (GLWTSAFGIVGLALNLR).

The protein belongs to the reaction center PufL/M/PsbA/D family. As to quaternary structure, PSII is composed of 1 copy each of membrane proteins PsbA, PsbB, PsbC, PsbD, PsbE, PsbF, PsbH, PsbI, PsbJ, PsbK, PsbL, PsbM, PsbT, PsbX, PsbY, PsbZ, Psb30/Ycf12, at least 3 peripheral proteins of the oxygen-evolving complex and a large number of cofactors. It forms dimeric complexes. The D1/D2 heterodimer binds P680, chlorophylls that are the primary electron donor of PSII, and subsequent electron acceptors. It shares a non-heme iron and each subunit binds pheophytin, quinone, additional chlorophylls, carotenoids and lipids. There is also a Cl(-1) ion associated with D1 and D2, which is required for oxygen evolution. The PSII complex binds additional chlorophylls, carotenoids and specific lipids. is required as a cofactor.

It is found in the plastid. It localises to the chloroplast thylakoid membrane. It carries out the reaction 2 a plastoquinone + 4 hnu + 2 H2O = 2 a plastoquinol + O2. Photosystem II (PSII) is a light-driven water:plastoquinone oxidoreductase that uses light energy to abstract electrons from H(2)O, generating O(2) and a proton gradient subsequently used for ATP formation. It consists of a core antenna complex that captures photons, and an electron transfer chain that converts photonic excitation into a charge separation. The D1/D2 (PsbA/PsbD) reaction center heterodimer binds P680, the primary electron donor of PSII as well as several subsequent electron acceptors. D2 is needed for assembly of a stable PSII complex. This chain is Photosystem II D2 protein, found in Pyropia yezoensis (Susabi-nori).